The following is a 128-amino-acid chain: MATAPVKKKKKVNVTQDGIVHIKATFNNIAVTITDVTGNTVSWSTAGKNGFKGSKKNTPYASQVTAESAAKEAYDLGMRKVDVRIKGPGSGRDAAIRSLQNAGLEVKTISDITPLPHNGCRPPKRRRV.

Belongs to the universal ribosomal protein uS11 family. Part of the 30S ribosomal subunit. Interacts with proteins S7 and S18. Binds to IF-3.

In terms of biological role, located on the platform of the 30S subunit, it bridges several disparate RNA helices of the 16S rRNA. Forms part of the Shine-Dalgarno cleft in the 70S ribosome. This chain is Small ribosomal subunit protein uS11, found in Chloroherpeton thalassium (strain ATCC 35110 / GB-78).